A 914-amino-acid polypeptide reads, in one-letter code: TRPM8 channel-associated factor 3 (914 aa).

The region spanning 533–832 is the Peptidase M60 domain; that stretch reads NSWVSTGLYL…TYLQLQEGFG (300 aa).

Belongs to the TCAF family. Prostate-specific. Present in both dorso-lateral and anterior prostate.

Its function is as follows. May play a role in the regulation of the cation channel TRPM8 activity. This Mus musculus (Mouse) protein is TRPM8 channel-associated factor 3.